The chain runs to 339 residues: MSIARRTTLSKFLIEQQRETNNLPADLRLLIEVVARACKAISYNVSKGALGEALGTAGSENVQGEVQKKLDILSNEILLDANEWGGNLAAMASEEMETFFPIPANYPRGEYLLVFDPLDGSSNIDVNVSIGTIFSVLRCPDGKQATEESFLQPGTEQVAAGYAVYGPQTVFVLTTGNGVNCFTLDREVGSWVLTQSNMQIPADTREYAINASNARHWYEPVQRYVDELNAGKDGPRGDNFNMRWIASMVADVHRILNRGGIFMYPADKRTPDRPGKLRLMYEANPMSFIVEQAGGAATTGTQRIMEVQPTGLHQRVPVFLGSKNEVERVTSYHAEGEGK.

Mg(2+) contacts are provided by Glu94, Asp116, Leu118, and Asp119. Substrate-binding positions include 119–122 (DGSS), Asn210, and Lys276. Glu282 lines the Mg(2+) pocket.

The protein belongs to the FBPase class 1 family. As to quaternary structure, homotetramer. Mg(2+) serves as cofactor.

It is found in the cytoplasm. The catalysed reaction is beta-D-fructose 1,6-bisphosphate + H2O = beta-D-fructose 6-phosphate + phosphate. Its pathway is carbohydrate biosynthesis; gluconeogenesis. This Burkholderia ambifaria (strain MC40-6) protein is Fructose-1,6-bisphosphatase class 1.